The following is a 92-amino-acid chain: Large ribosomal subunit protein bL27 (92 aa).

The propeptide occupies 1–8 (MLMNLQFF). Positions 11–30 (HKGGGSTANGRDSAGRRLGA) are disordered.

The protein belongs to the bacterial ribosomal protein bL27 family. In terms of processing, the N-terminus is cleaved by ribosomal processing cysteine protease Prp.

This Lactiplantibacillus plantarum (strain ATCC BAA-793 / NCIMB 8826 / WCFS1) (Lactobacillus plantarum) protein is Large ribosomal subunit protein bL27.